The following is a 129-amino-acid chain: uncharacterized protein (129 aa).

This sequence belongs to the HesB/IscA family.

This is an uncharacterized protein from Buchnera aphidicola subsp. Schizaphis graminum (strain Sg).